Consider the following 150-residue polypeptide: Large ribosomal subunit protein uL13 (150 aa).

Residues 130–150 (EHPHAAQQPKTLQLDPAASAQ) are disordered.

Belongs to the universal ribosomal protein uL13 family. Part of the 50S ribosomal subunit.

This protein is one of the early assembly proteins of the 50S ribosomal subunit, although it is not seen to bind rRNA by itself. It is important during the early stages of 50S assembly. In Synechococcus sp. (strain CC9311), this protein is Large ribosomal subunit protein uL13.